Here is a 354-residue protein sequence, read N- to C-terminus: GDSL esterase/lipase At5g03820 (354 aa).

A signal peptide spans 1–24 (MKMFIIMLMTFSVIACFYAGVGTG). Ser37 functions as the Nucleophile in the catalytic mechanism. 7 N-linked (GlcNAc...) asparagine glycosylation sites follow: Asn66, Asn100, Asn237, Asn256, Asn257, Asn261, and Asn321. Active-site residues include Asp329 and His332.

It belongs to the 'GDSL' lipolytic enzyme family.

The protein resides in the secreted. In Arabidopsis thaliana (Mouse-ear cress), this protein is GDSL esterase/lipase At5g03820.